The chain runs to 1116 residues: Ubiquitin C-terminal hydrolase 12 (1116 aa).

A compositionally biased stretch (pro residues) spans 1 to 10; that stretch reads MTMMTPPPVD. The disordered stretch occupies residues 1–52; it reads MTMMTPPPVDQPEDEEMLVPNSDLVDGPAQPMEVTQPETAASTVENQPAEDP. Polar residues predominate over residues 36–46; it reads QPETAASTVEN. Positions 54-179 constitute an MATH domain; that stretch reads TLKFTWTIPN…NDTVLVEAEV (126 aa). Positions 199–524 constitute a USP domain; it reads VGLKNQGATC…NAYMLVYIRE (326 aa). The active-site Nucleophile is the cysteine 208. Residue histidine 455 is the Proton acceptor of the active site.

This sequence belongs to the peptidase C19 family. In terms of assembly, interacts with SIC/RON3.

It catalyses the reaction Thiol-dependent hydrolysis of ester, thioester, amide, peptide and isopeptide bonds formed by the C-terminal Gly of ubiquitin (a 76-residue protein attached to proteins as an intracellular targeting signal).. Recognizes and hydrolyzes the peptide bond at the C-terminal Gly of ubiquitin. Involved in the processing of poly-ubiquitin precursors as well as that of ubiquitinated proteins. Positive regulator of root meristem development that, together with UBP13, prevents the ubiquitination and turnover of RGFR1 induced by the RGF1 hormone peptide, thus influencing PLT1 and PLT2 expression. This Arabidopsis thaliana (Mouse-ear cress) protein is Ubiquitin C-terminal hydrolase 12.